The following is a 348-amino-acid chain: Protein arginine N-methyltransferase 1 (348 aa).

One can recognise an SAM-dependent MTase PRMT-type domain in the interval 20-322; it reads EQHYFNSYDH…EKNNRDLNIK (303 aa). S-adenosyl-L-methionine contacts are provided by H33, R42, G66, D88, and E117. Residues E132 and E141 contribute to the active site.

The protein belongs to the class I-like SAM-binding methyltransferase superfamily. Protein arginine N-methyltransferase family. As to quaternary structure, homodimer. The dimers can then associate to form a ring-shaped homohexamer. Interacts with NPL3, BRE5, MTR4, SNF2, SUM1, and SSD1.

The protein localises to the nucleus. It catalyses the reaction L-arginyl-[protein] + S-adenosyl-L-methionine = N(omega)-methyl-L-arginyl-[protein] + S-adenosyl-L-homocysteine + H(+). The catalysed reaction is L-arginyl-[protein] + 2 S-adenosyl-L-methionine = N(omega),N(omega)-dimethyl-L-arginyl-[protein] + 2 S-adenosyl-L-homocysteine + 2 H(+). In terms of biological role, S-adenosyl-L-methionine-dependent protein-arginine N-methyltransferase that catalyzes both the mono- and asymmetric (type I) dimethylation of the guanidino nitrogens of arginine residues in a variety of RNA-binding proteins such as heterogeneous nuclear ribonucleoproteins (hnRNPs) and small nuclear ribonucleoproteins (snRNPs). Methylates NAB2, NPL3, HRP1 and YRA1, shuttling hnRNPs involved in mRNA processing and export, facilitating their export out of the nucleus. Methylation of NPL3 weakens its interaction with THO2, a component of the TREX (transcription/export) complex important for transcriptional elongation and recruitment of mRNA export factors. Methylates the hnRNP HRB1, but does not influence its subcellular location. Methylates the nucleolar proteins GAR1, NOP1 and NSR1. Methylates the snRNP SNP1 and modulates the cotranscriptional recruitment of splicing factors. Dimethylates free histone H4 (HHF1/HHF2) at 'Arg-4' (H4R3me2a) and plays a role in preservation and establishment of silent chromatin domains. Mono- and dimethylates ribosomal protein S2 (RPS2) at 'Arg-11'. Methylates the catalytic subunit of the SWI/SNF chromatin-remodeling complex SNF2. The protein is Protein arginine N-methyltransferase 1 of Saccharomyces cerevisiae (strain ATCC 204508 / S288c) (Baker's yeast).